The sequence spans 211 residues: Endo-1,4-beta-xylanase 6 (211 aa).

A signal peptide spans 1-16 (MKVTAAFAGLLVTALA). Residues 19–210 (APEPVLVSRS…GAGSASVTIS (192 aa)) enclose the GH11 domain. Glutamate 106 acts as the Nucleophile in catalysis. Glutamate 197 (proton donor) is an active-site residue.

It belongs to the glycosyl hydrolase 11 (cellulase G) family.

It localises to the secreted. The enzyme catalyses Endohydrolysis of (1-&gt;4)-beta-D-xylosidic linkages in xylans.. It functions in the pathway glycan degradation; xylan degradation. Endo-1,4-beta-xylanase involved in the hydrolysis of xylan, a major structural heterogeneous polysaccharide found in plant biomass representing the second most abundant polysaccharide in the biosphere, after cellulose. This chain is Endo-1,4-beta-xylanase 6 (XYN6), found in Aspergillus niger.